We begin with the raw amino-acid sequence, 316 residues long: GTP cyclohydrolase FolE2 1 (316 aa).

This sequence belongs to the GTP cyclohydrolase IV family.

It carries out the reaction GTP + H2O = 7,8-dihydroneopterin 3'-triphosphate + formate + H(+). The protein operates within cofactor biosynthesis; 7,8-dihydroneopterin triphosphate biosynthesis; 7,8-dihydroneopterin triphosphate from GTP: step 1/1. Its function is as follows. Converts GTP to 7,8-dihydroneopterin triphosphate. In Burkholderia orbicola (strain AU 1054), this protein is GTP cyclohydrolase FolE2 1.